Consider the following 102-residue polypeptide: Small ribosomal subunit protein bS20 (102 aa).

Belongs to the bacterial ribosomal protein bS20 family.

Its function is as follows. Binds directly to 16S ribosomal RNA. This chain is Small ribosomal subunit protein bS20, found in Synechococcus sp. (strain WH7803).